Reading from the N-terminus, the 359-residue chain is Pyruvate dehydrogenase E1 component subunit beta, mitochondrial (359 aa).

Residues 1–19 (MLGVIRNKTIRPSFSAFRF) constitute a mitochondrion transit peptide. A thiamine diphosphate-binding site is contributed by glutamate 82. K(+) contacts are provided by isoleucine 135, alanine 183, isoleucine 184, and aspartate 186.

Tetramer of 2 alpha and 2 beta subunits. Thiamine diphosphate is required as a cofactor.

The protein localises to the mitochondrion matrix. The enzyme catalyses N(6)-[(R)-lipoyl]-L-lysyl-[protein] + pyruvate + H(+) = N(6)-[(R)-S(8)-acetyldihydrolipoyl]-L-lysyl-[protein] + CO2. Functionally, the pyruvate dehydrogenase complex catalyzes the overall conversion of pyruvate to acetyl-CoA and CO(2). It contains multiple copies of three enzymatic components: pyruvate dehydrogenase (E1), dihydrolipoamide acetyltransferase (E2) and lipoamide dehydrogenase (E3). The chain is Pyruvate dehydrogenase E1 component subunit beta, mitochondrial from Pisum sativum (Garden pea).